Here is a 451-residue protein sequence, read N- to C-terminus: Tubulin alpha-2 chain (451 aa).

Position 11 (Q11) interacts with GTP. The residue at position 40 (K40) is an N6-acetyllysine. Residues E71, G144, T145, T179, N206, and N228 each coordinate GTP. Mg(2+) is bound at residue E71. E254 is an active-site residue.

The protein belongs to the tubulin family. Dimer of alpha and beta chains. A typical microtubule is a hollow water-filled tube with an outer diameter of 25 nm and an inner diameter of 15 nM. Alpha-beta heterodimers associate head-to-tail to form protofilaments running lengthwise along the microtubule wall with the beta-tubulin subunit facing the microtubule plus end conferring a structural polarity. Microtubules usually have 13 protofilaments but different protofilament numbers can be found in some organisms and specialized cells. Mg(2+) is required as a cofactor. Post-translationally, undergoes a tyrosination/detyrosination cycle, the cyclic removal and re-addition of a C-terminal tyrosine residue by the enzymes tubulin tyrosine carboxypeptidase (TTCP) and tubulin tyrosine ligase (TTL), respectively. In terms of processing, acetylation of alpha chains at Lys-40 stabilizes microtubules and affects affinity and processivity of microtubule motors. This modification has a role in multiple cellular functions, ranging from cell motility, cell cycle progression or cell differentiation to intracellular trafficking and signaling.

It is found in the cytoplasm. The protein localises to the cytoskeleton. The catalysed reaction is GTP + H2O = GDP + phosphate + H(+). Functionally, tubulin is the major constituent of microtubules, a cylinder consisting of laterally associated linear protofilaments composed of alpha- and beta-tubulin heterodimers. Microtubules grow by the addition of GTP-tubulin dimers to the microtubule end, where a stabilizing cap forms. Below the cap, tubulin dimers are in GDP-bound state, owing to GTPase activity of alpha-tubulin. This chain is Tubulin alpha-2 chain (TUBA2), found in Hordeum vulgare (Barley).